Consider the following 214-residue polypeptide: External core antigen (214 aa).

Positions 1-19 are cleaved as a signal peptide; that stretch reads MQLFHLCLIISCTCPTVQA. Residues 25 to 27 form an HBEAG region; sequence GWL. The interval 165-214 is disordered; the sequence is NAPILSTLPETTVVRRRDRGRSPRRRTPSPRRRRSQSPRRRRSQSRESQC. Basic residues predominate over residues 178 to 207; sequence VRRRDRGRSPRRRTPSPRRRRSQSPRRRRS. A 1; half-length repeat occupies 186-192; the sequence is SPRRRTP. A 3 X 8 AA repeats of S-P-R-R-R-R-S-Q region spans residues 186–208; sequence SPRRRTPSPRRRRSQSPRRRRSQ. Residues 186 to 214 constitute a propeptide that is removed on maturation; it reads SPRRRTPSPRRRRSQSPRRRRSQSRESQC. Repeat copies occupy residues 193–200 and 201–208.

This sequence belongs to the orthohepadnavirus precore antigen family. In terms of assembly, homodimerizes. Phosphorylated. Post-translationally, cleaved by host furin.

Its subcellular location is the secreted. The protein resides in the host nucleus. May regulate immune response to the intracellular capsid in acting as a T-cell tolerogen, by having an immunoregulatory effect which prevents destruction of infected cells by cytotoxic T-cells. This immune regulation may predispose to chronicity during perinatal infections and prevent severe liver injury during adult infections. The protein is External core antigen of Hepatitis B virus genotype A2 (isolate Japan/11D11HCCW/1998) (HBV-A).